We begin with the raw amino-acid sequence, 493 residues long: Probable cytosol aminopeptidase (493 aa).

Lysine 262 and aspartate 267 together coordinate Mn(2+). Residue lysine 274 is part of the active site. Aspartate 286, aspartate 345, and glutamate 347 together coordinate Mn(2+). Arginine 349 is an active-site residue.

This sequence belongs to the peptidase M17 family. Requires Mn(2+) as cofactor.

It is found in the cytoplasm. The catalysed reaction is Release of an N-terminal amino acid, Xaa-|-Yaa-, in which Xaa is preferably Leu, but may be other amino acids including Pro although not Arg or Lys, and Yaa may be Pro. Amino acid amides and methyl esters are also readily hydrolyzed, but rates on arylamides are exceedingly low.. It carries out the reaction Release of an N-terminal amino acid, preferentially leucine, but not glutamic or aspartic acids.. Presumably involved in the processing and regular turnover of intracellular proteins. Catalyzes the removal of unsubstituted N-terminal amino acids from various peptides. The protein is Probable cytosol aminopeptidase of Cyanothece sp. (strain PCC 7425 / ATCC 29141).